A 144-amino-acid chain; its full sequence is MIAFAKQYRVHISPQKARLVCQLIVGKKINDAQNILLNTPKKAAYFLTKLLNSAISNATNNHGMSGDLLYVFECVANQGPSMKRTIARAKGSGSVLTKRSSNLVIKLSDNPNERKLLLTQQKELVKKRTMGHKKEKAKQKQKQQ.

The segment at 123–144 is disordered; sequence ELVKKRTMGHKKEKAKQKQKQQ. The span at 125–144 shows a compositional bias: basic residues; it reads VKKRTMGHKKEKAKQKQKQQ.

Belongs to the universal ribosomal protein uL22 family. As to quaternary structure, part of the 50S ribosomal subunit.

In terms of biological role, this protein binds specifically to 23S rRNA; its binding is stimulated by other ribosomal proteins, e.g. L4, L17, and L20. It is important during the early stages of 50S assembly. It makes multiple contacts with different domains of the 23S rRNA in the assembled 50S subunit and ribosome. Functionally, the globular domain of the protein is located near the polypeptide exit tunnel on the outside of the subunit, while an extended beta-hairpin is found that lines the wall of the exit tunnel in the center of the 70S ribosome. The sequence is that of Large ribosomal subunit protein uL22 from Mycoplasma genitalium (strain ATCC 33530 / DSM 19775 / NCTC 10195 / G37) (Mycoplasmoides genitalium).